The sequence spans 432 residues: Probable exopolygalacturonase X (432 aa).

Positions Met1 to Gly23 are cleaved as a signal peptide. Residues Asn113, Asn129, and Asn199 are each glycosylated (N-linked (GlcNAc...) asparagine). One copy of the PbH1 1 repeat lies at Ser231–Pro252. Asp245 serves as the catalytic Proton donor. An intrachain disulfide couples Cys247 to Cys264. Residues Asn253 and Asn265 are each glycosylated (N-linked (GlcNAc...) asparagine). PbH1 repeat units follow at residues Ser254 to Ser274, Val285 to Val306, and Val327 to Gln348. His268 is an active-site residue. 5 N-linked (GlcNAc...) asparagine glycosylation sites follow: Asn292, Asn297, Asn329, Asn354, and Asn364. The PbH1 5 repeat unit spans residues Pro362–Ser394. Cys392 and Cys398 are oxidised to a cystine.

It belongs to the glycosyl hydrolase 28 family.

It localises to the secreted. The catalysed reaction is [(1-&gt;4)-alpha-D-galacturonosyl](n) + H2O = alpha-D-galacturonate + [(1-&gt;4)-alpha-D-galacturonosyl](n-1). Its function is as follows. Specific in hydrolyzing the terminal glycosidic bond of polygalacturonic acid and oligogalacturonates. The sequence is that of Probable exopolygalacturonase X (pgaX) from Aspergillus fumigatus (strain CBS 144.89 / FGSC A1163 / CEA10) (Neosartorya fumigata).